The chain runs to 489 residues: Pluviatolide synthase (489 aa).

The helical transmembrane segment at 6-26 (SVLGLSSTLIIALAITVIFLL) threads the bilayer. Cysteine 432 contacts heme.

This sequence belongs to the cytochrome P450 family. It depends on heme as a cofactor.

It is found in the membrane. It carries out the reaction (-)-matairesinol + reduced [NADPH--hemoprotein reductase] + O2 = (-)-pluviatolide + oxidized [NADPH--hemoprotein reductase] + 2 H2O + H(+). It functions in the pathway aromatic compound metabolism; phenylpropanoid biosynthesis. Cytochrome P450 involved in the biosynthesis of etoposide, a chemotherapeutic compound of the topoisomerase inhibitor family. Catalyzes the conversion of matairesinol to pluviatolide. The chain is Pluviatolide synthase from Podophyllum peltatum (American mandrake).